The sequence spans 585 residues: Organic cation transporter 1 (585 aa).

Topologically, residues 1-40 (MSFQAMETFAEISQEILMSATKPPDFDFVLEQVGNYGTYQ) are cytoplasmic. A helical transmembrane segment spans residues 41–61 (IVFFFIICLPTSLPSAFSAFN). Residues 62-155 (IPFVVGNPPH…LVCDQQAWIE (94 aa)) lie on the Extracellular side of the membrane. N-linked (GlcNAc...) asparagine glycans are attached at residues Asn-87, Asn-98, and Asn-133. Residues 156-176 (ISTTSFYVGSFIGNCLFGYVA) traverse the membrane as a helical segment. Residues 177-184 (DKFGRRRS) are Cytoplasmic-facing. The helical transmembrane segment at 185–205 (FFVILTVLIVCGTASSFAKDI) threads the bilayer. The Extracellular portion of the chain corresponds to 206 to 212 (ESFIILR). Residues 213-233 (FFTGLAFPALFQIPFIICMEF) traverse the membrane as a helical segment. Over 234-243 (MGNSGRIFSG) the chain is Cytoplasmic. Residues 244–264 (LMTSLFFGAAMALLGVVAMFI) form a helical membrane-spanning segment. The Extracellular portion of the chain corresponds to 265–269 (RRWRQ). A helical transmembrane segment spans residues 270-290 (LTFFCNAPFAFYIIYYFFLPE). Residues 291 to 360 (SPRWSVSVGK…FKTPNLRRKT (70 aa)) are Cytoplasmic-facing. The helical transmembrane segment at 361–381 (LIVTYIWVMNAIIYNGLTLNV) threads the bilayer. Residues 382-389 (SNLPVDDY) are Extracellular-facing. A helical membrane pass occupies residues 390-410 (WSFIINGAVELPGYFVVWPLL). Topologically, residues 411–416 (QCAGRR) are cytoplasmic. The chain crosses the membrane as a helical span at residues 417-437 (WTLAATMIVCGIGCVSAMFMP). The Extracellular portion of the chain corresponds to 438 to 446 (DGYPWLVAS). A helical transmembrane segment spans residues 447-467 (ASFIGKFGVGSGFAVIYIFAG). The Cytoplasmic portion of the chain corresponds to 468-476 (ELYPTVVRA). Residues 477–497 (IGMGMSSMVAGSGLLLAPHIV) traverse the membrane as a helical segment. Topologically, residues 498-504 (NLGKIVK) are extracellular. Residues 505 to 525 (ILPLLIMGLMALSAGILTFFL) traverse the membrane as a helical segment. Residues 526–585 (PETLGAPLPMTIEDAENFGKKPEPDSGMFTQAAKKRESQPLLEPHTPMDRRRRSSRLMNI) lie on the Cytoplasmic side of the membrane. Positions 544 to 585 (GKKPEPDSGMFTQAAKKRESQPLLEPHTPMDRRRRSSRLMNI) are disordered. Positions 575–585 (RRRRSSRLMNI) are enriched in basic residues.

It belongs to the major facilitator (TC 2.A.1) superfamily. Organic cation transporter (TC 2.A.1.19) family.

It localises to the membrane. Functionally, transports organic cations such as tetraethylammonium (TEA). Displays a broad substrate specificity. The sequence is that of Organic cation transporter 1 (oct-1) from Caenorhabditis elegans.